Consider the following 137-residue polypeptide: Large-conductance mechanosensitive channel (137 aa).

Helical transmembrane passes span 10–30 (FAMRGNVVDLAVGVIIGAAFG) and 76–96 (GVFLQTVFDFVIVAFAIFMAI).

This sequence belongs to the MscL family. In terms of assembly, homopentamer.

The protein resides in the cell inner membrane. Channel that opens in response to stretch forces in the membrane lipid bilayer. May participate in the regulation of osmotic pressure changes within the cell. The chain is Large-conductance mechanosensitive channel from Erwinia tasmaniensis (strain DSM 17950 / CFBP 7177 / CIP 109463 / NCPPB 4357 / Et1/99).